A 303-amino-acid chain; its full sequence is Aspartate carbamoyltransferase catalytic subunit (303 aa).

Residues Arg49 and Thr50 each contribute to the carbamoyl phosphate site. An L-aspartate-binding site is contributed by Lys77. The carbamoyl phosphate site is built by Arg99, His126, and Gln129. Arg159 and Arg211 together coordinate L-aspartate. Carbamoyl phosphate contacts are provided by Ser252 and Pro253.

It belongs to the aspartate/ornithine carbamoyltransferase superfamily. ATCase family. Heterododecamer (2C3:3R2) of six catalytic PyrB chains organized as two trimers (C3), and six regulatory PyrI chains organized as three dimers (R2).

The catalysed reaction is carbamoyl phosphate + L-aspartate = N-carbamoyl-L-aspartate + phosphate + H(+). The protein operates within pyrimidine metabolism; UMP biosynthesis via de novo pathway; (S)-dihydroorotate from bicarbonate: step 2/3. In terms of biological role, catalyzes the condensation of carbamoyl phosphate and aspartate to form carbamoyl aspartate and inorganic phosphate, the committed step in the de novo pyrimidine nucleotide biosynthesis pathway. The polypeptide is Aspartate carbamoyltransferase catalytic subunit (Listeria welshimeri serovar 6b (strain ATCC 35897 / DSM 20650 / CCUG 15529 / CIP 8149 / NCTC 11857 / SLCC 5334 / V8)).